A 383-amino-acid polypeptide reads, in one-letter code: Homeobox protein knotted-1-like 5 (383 aa).

Disordered stretches follow at residues 1–35 (MSFNSSHLLPPQEDLPLRHFTDQSQQPPPQRHFSE) and 52–73 (TTADSDLAPPHRNGDNSVADTN). In terms of domain architecture, ELK spans 281-301 (ELKHELKQGFKEKIVDIREEI). A DNA-binding region (homeobox; TALE-type) is located at residues 302 to 365 (MRKRRAGKLP…NQRKRNWNSN (64 aa)). The segment at 361 to 383 (NWNSNSSTSSTLTKNKRKRTGKS) is disordered. Over residues 362-373 (WNSNSSTSSTLT) the composition is skewed to low complexity. A compositionally biased stretch (basic residues) spans 374-383 (KNKRKRTGKS).

This sequence belongs to the TALE/KNOX homeobox family. As to quaternary structure, may form heterodimeric complex with the TALE/BELL protein BEL1, BLH1 and BLH2. Interacts with OFP1, OFP2, OFP3 and OFP4.

The protein resides in the nucleus. This is Homeobox protein knotted-1-like 5 (KNAT5) from Arabidopsis thaliana (Mouse-ear cress).